The sequence spans 500 residues: Cysteine-rich secretory protein LCCL domain-containing 1 (500 aa).

The first 23 residues, 1–23 (MMCKAQEWLRVTALLFVARAVPA), serve as a signal peptide directing secretion. One can recognise an SCP domain in the interval 66–206 (LDLHNKLRSQ…PKAVYLVCNY (141 aa)). Residues 258–281 (EIERQQSQVHDTHVRTRSDDSDRN) form a disordered region. 2 consecutive LCCL domains span residues 289–384 (MSQI…ANSF) and 390–492 (TVQA…TGGK). 4 disulfide bridges follow: cysteine 295–cysteine 313, cysteine 317–cysteine 337, cysteine 396–cysteine 418, and cysteine 422–cysteine 445.

This sequence belongs to the CRISP family.

It is found in the secreted. In Mus musculus (Mouse), this protein is Cysteine-rich secretory protein LCCL domain-containing 1 (Crispld1).